Reading from the N-terminus, the 363-residue chain is Probable protein phosphatase 2C member 13, mitochondrial (363 aa).

The N-terminal 59 residues, 1–59 (MVCFASLRRALPLLLRATTTTTPRFLLPRALSGGVGGGAAVDARALLRGHSGWRGLRVA), are a transit peptide targeting the mitochondrion. In terms of domain architecture, PPM-type phosphatase spans 111–357 (KCGYSSFRGK…DNITCIVVQF (247 aa)). Positions 147, 148, 309, and 348 each coordinate Mn(2+).

The protein belongs to the PP2C family. Requires Mg(2+) as cofactor. The cofactor is Mn(2+). In terms of tissue distribution, highly expressed in mature pollen grains.

The protein localises to the mitochondrion. The catalysed reaction is O-phospho-L-seryl-[protein] + H2O = L-seryl-[protein] + phosphate. It carries out the reaction O-phospho-L-threonyl-[protein] + H2O = L-threonyl-[protein] + phosphate. Functionally, probable protein phosphatase that may play a role as a mitochondrial signal transduction mediator in pollen germination. May function in retrograde signaling from the mitochondria to the nucleus. May be a downstream factor of cytoplasmic male sterility (CMS). CMS is caused by genetic incompatibility between nuclei and mitochondria within male reproductive organs. This is Probable protein phosphatase 2C member 13, mitochondrial from Oryza sativa subsp. japonica (Rice).